The sequence spans 164 residues: 4-hydroxy-4-methyl-2-oxoglutarate aldolase (164 aa).

Residues 74–77 (GGNL) and arginine 96 each bind substrate. A divalent metal cation is bound at residue aspartate 97.

This sequence belongs to the class II aldolase/RraA-like family. Homotrimer. Ni(2+) serves as cofactor. The cofactor is Co(2+). Zn(2+) is required as a cofactor.

The enzyme catalyses 4-hydroxy-4-methyl-2-oxoglutarate = 2 pyruvate. The catalysed reaction is oxaloacetate + H(+) = pyruvate + CO2. Its activity is regulated as follows. Competitively inhibited by oxalate, a pyruvate enolate analog. In terms of biological role, catalyzes the aldol cleavage of 4-hydroxy-4-methyl-2-oxoglutarate (HMG) into 2 molecules of pyruvate. Also contains a secondary oxaloacetate (OAA) decarboxylase activity due to the common pyruvate enolate transition state formed following C-C bond cleavage in the retro-aldol and decarboxylation reactions. The polypeptide is 4-hydroxy-4-methyl-2-oxoglutarate aldolase (Thermus thermophilus (strain ATCC 27634 / DSM 579 / HB8)).